A 372-amino-acid polypeptide reads, in one-letter code: 4-hydroxy-3-methylbut-2-en-1-yl diphosphate synthase (flavodoxin) (372 aa).

[4Fe-4S] cluster is bound by residues Cys270, Cys273, Cys305, and Glu312.

Belongs to the IspG family. The cofactor is [4Fe-4S] cluster.

The enzyme catalyses (2E)-4-hydroxy-3-methylbut-2-enyl diphosphate + oxidized [flavodoxin] + H2O + 2 H(+) = 2-C-methyl-D-erythritol 2,4-cyclic diphosphate + reduced [flavodoxin]. Its pathway is isoprenoid biosynthesis; isopentenyl diphosphate biosynthesis via DXP pathway; isopentenyl diphosphate from 1-deoxy-D-xylulose 5-phosphate: step 5/6. Its function is as follows. Converts 2C-methyl-D-erythritol 2,4-cyclodiphosphate (ME-2,4cPP) into 1-hydroxy-2-methyl-2-(E)-butenyl 4-diphosphate. The sequence is that of 4-hydroxy-3-methylbut-2-en-1-yl diphosphate synthase (flavodoxin) from Aliivibrio fischeri (strain ATCC 700601 / ES114) (Vibrio fischeri).